Here is a 228-residue protein sequence, read N- to C-terminus: Lipoprotein-releasing system ATP-binding protein LolD (228 aa).

The ABC transporter domain maps to 8–228 (LQAKKLVKAY…ELHDGLLRRL (221 aa)). 44 to 51 (GASGSGKS) is an ATP binding site.

It belongs to the ABC transporter superfamily. Lipoprotein translocase (TC 3.A.1.125) family. The complex is composed of two ATP-binding proteins (LolD) and two transmembrane proteins (LolC and LolE).

It is found in the cell inner membrane. Its function is as follows. Part of the ABC transporter complex LolCDE involved in the translocation of mature outer membrane-directed lipoproteins, from the inner membrane to the periplasmic chaperone, LolA. Responsible for the formation of the LolA-lipoprotein complex in an ATP-dependent manner. This chain is Lipoprotein-releasing system ATP-binding protein LolD, found in Alcanivorax borkumensis (strain ATCC 700651 / DSM 11573 / NCIMB 13689 / SK2).